Consider the following 223-residue polypeptide: UPF0441 protein YgiB (223 aa).

A compositionally biased stretch (low complexity) spans 178-195 (TVPKTAMAPKPATTTTVT). The disordered stretch occupies residues 178 to 223 (TVPKTAMAPKPATTTTVTRGGFGESVAKQSTMQRSATGTSSRSMGG). Over residues 204–223 (AKQSTMQRSATGTSSRSMGG) the composition is skewed to polar residues.

It belongs to the UPF0441 family.

This is UPF0441 protein YgiB from Shigella flexneri serotype 5b (strain 8401).